We begin with the raw amino-acid sequence, 245 residues long: tRNA pseudouridine synthase A 2 (245 aa).

Aspartate 53 functions as the Nucleophile in the catalytic mechanism. Tyrosine 111 is a binding site for substrate.

This sequence belongs to the tRNA pseudouridine synthase TruA family. As to quaternary structure, homodimer.

It catalyses the reaction uridine(38/39/40) in tRNA = pseudouridine(38/39/40) in tRNA. Formation of pseudouridine at positions 38, 39 and 40 in the anticodon stem and loop of transfer RNAs. The sequence is that of tRNA pseudouridine synthase A 2 from Bacillus thuringiensis subsp. konkukian (strain 97-27).